Here is a 411-residue protein sequence, read N- to C-terminus: Dual-specificity RNA methyltransferase RlmN (411 aa).

Residue E125 is the Proton acceptor of the active site. In terms of domain architecture, Radical SAM core spans 131 to 380 (EEGRGTLCIS…IRTPRGRDIL (250 aa)). Residues C138 and C383 are joined by a disulfide bond. Positions 145, 149, and 152 each coordinate [4Fe-4S] cluster. S-adenosyl-L-methionine is bound by residues 209-210 (GE), S241, 263-265 (SLH), and N340. The active-site S-methylcysteine intermediate is C383.

Belongs to the radical SAM superfamily. RlmN family. The cofactor is [4Fe-4S] cluster.

The protein resides in the cytoplasm. It catalyses the reaction adenosine(2503) in 23S rRNA + 2 reduced [2Fe-2S]-[ferredoxin] + 2 S-adenosyl-L-methionine = 2-methyladenosine(2503) in 23S rRNA + 5'-deoxyadenosine + L-methionine + 2 oxidized [2Fe-2S]-[ferredoxin] + S-adenosyl-L-homocysteine. It carries out the reaction adenosine(37) in tRNA + 2 reduced [2Fe-2S]-[ferredoxin] + 2 S-adenosyl-L-methionine = 2-methyladenosine(37) in tRNA + 5'-deoxyadenosine + L-methionine + 2 oxidized [2Fe-2S]-[ferredoxin] + S-adenosyl-L-homocysteine. In terms of biological role, specifically methylates position 2 of adenine 2503 in 23S rRNA and position 2 of adenine 37 in tRNAs. m2A2503 modification seems to play a crucial role in the proofreading step occurring at the peptidyl transferase center and thus would serve to optimize ribosomal fidelity. The sequence is that of Dual-specificity RNA methyltransferase RlmN from Brucella abortus (strain S19).